The sequence spans 201 residues: Small ribosomal subunit protein uS4c (201 aa).

The disordered stretch occupies residues 15–44 (LGALPGLTSKRPRSGSDLRNQSRSGKKSQY). The S4 RNA-binding domain maps to 89-150 (MRLDNILFRL…EQRSRALIQN (62 aa)).

The protein belongs to the universal ribosomal protein uS4 family. Part of the 30S ribosomal subunit. Contacts protein S5. The interaction surface between S4 and S5 is involved in control of translational fidelity.

The protein localises to the plastid. Its subcellular location is the chloroplast. Its function is as follows. One of the primary rRNA binding proteins, it binds directly to 16S rRNA where it nucleates assembly of the body of the 30S subunit. Functionally, with S5 and S12 plays an important role in translational accuracy. The polypeptide is Small ribosomal subunit protein uS4c (rps4) (Calycanthus floridus var. glaucus (Eastern sweetshrub)).